Consider the following 225-residue polypeptide: Urease accessory protein UreF (225 aa).

The protein belongs to the UreF family. UreD, UreF and UreG form a complex that acts as a GTP-hydrolysis-dependent molecular chaperone, activating the urease apoprotein by helping to assemble the nickel containing metallocenter of UreC. The UreE protein probably delivers the nickel.

The protein localises to the cytoplasm. Required for maturation of urease via the functional incorporation of the urease nickel metallocenter. In Arthrobacter sp. (strain FB24), this protein is Urease accessory protein UreF.